A 574-amino-acid polypeptide reads, in one-letter code: Splicing factor U2af large subunit A (574 aa).

A disordered region spans residues 1-180 (MAEHEEQPYE…SKRVSGFDQG (180 aa)). Over residues 18 to 41 (PAPASAYAEYPAPEGSPPAAAAKP) the composition is skewed to low complexity. The segment covering 53 to 143 (RSQHETQPHD…ERRRDRDRDG (91 aa)) has biased composition (basic and acidic residues). Basic residues predominate over residues 144–172 (HRRHRSRSRSPSKGRDRRSRSRSRSRSSK). RRM domains follow at residues 238–321 (RRVY…RPTD), 358–436 (DRIF…RANQ), and 479–565 (QVVS…YPED).

This sequence belongs to the splicing factor SR family.

The protein resides in the nucleus. Necessary for the splicing of pre-mRNA. This chain is Splicing factor U2af large subunit A (U2AF65A), found in Oryza sativa subsp. japonica (Rice).